Here is a 92-residue protein sequence, read N- to C-terminus: UPF0250 protein VV0902 (92 aa).

Belongs to the UPF0250 family.

The polypeptide is UPF0250 protein VV0902 (Vibrio vulnificus (strain YJ016)).